The sequence spans 463 residues: RuvB-like 2 (463 aa).

77 to 84 (GQPGTGKT) contacts ATP.

It belongs to the RuvB family. As to quaternary structure, forms homohexameric rings. Can form a dodecamer with ruvbl1 made of two stacked hexameric rings. Component of the chromatin-remodeling Ino80 complex. Component of some MLL1/MLL complex.

The protein localises to the nucleus. Its subcellular location is the dynein axonemal particle. It catalyses the reaction ATP + H2O = ADP + phosphate + H(+). Its function is as follows. Has double-stranded DNA-stimulated ATPase activity. Has ATP-dependent DNA helicase (5' to 3') activity suggesting a role in nuclear processes such as recombination and transcription. Represses gene activation mediated by beta-catenin. Proposed core component of the chromatin remodeling Ino80 complex which exhibits DNA- and nucleosome-activated ATPase activity and catalyzes ATP-dependent nucleosome sliding. Involved in the endoplasmic reticulum (ER)-associated degradation (ERAD) pathway where it negatively regulates expression of ER stress response genes. May act as a regulator of embryonic heart growth. The chain is RuvB-like 2 (ruvbl2) from Danio rerio (Zebrafish).